A 290-amino-acid polypeptide reads, in one-letter code: Shikimate dehydrogenase (NADP(+)) (290 aa).

Residues 22–24 and threonine 68 each bind shikimate; that span reads SLS. The Proton acceptor role is filled by lysine 72. Shikimate contacts are provided by asparagine 93 and aspartate 108. NADP(+)-binding positions include 133–137 and isoleucine 228; that span reads GSGGS. Shikimate is bound at residue tyrosine 230. An NADP(+)-binding site is contributed by glycine 251.

The protein belongs to the shikimate dehydrogenase family. As to quaternary structure, homodimer.

It carries out the reaction shikimate + NADP(+) = 3-dehydroshikimate + NADPH + H(+). Its pathway is metabolic intermediate biosynthesis; chorismate biosynthesis; chorismate from D-erythrose 4-phosphate and phosphoenolpyruvate: step 4/7. In terms of biological role, involved in the biosynthesis of the chorismate, which leads to the biosynthesis of aromatic amino acids. Catalyzes the reversible NADPH linked reduction of 3-dehydroshikimate (DHSA) to yield shikimate (SA). In Leptospira borgpetersenii serovar Hardjo-bovis (strain JB197), this protein is Shikimate dehydrogenase (NADP(+)).